Consider the following 362-residue polypeptide: Chorismate synthase (362 aa).

The NADP(+) site is built by arginine 48 and arginine 54. Residues 131 to 133, 243 to 244, glycine 287, 302 to 306, and arginine 328 each bind FMN; these read RSS, NA, and KPTSS.

This sequence belongs to the chorismate synthase family. Homotetramer. It depends on FMNH2 as a cofactor.

It catalyses the reaction 5-O-(1-carboxyvinyl)-3-phosphoshikimate = chorismate + phosphate. It functions in the pathway metabolic intermediate biosynthesis; chorismate biosynthesis; chorismate from D-erythrose 4-phosphate and phosphoenolpyruvate: step 7/7. Functionally, catalyzes the anti-1,4-elimination of the C-3 phosphate and the C-6 proR hydrogen from 5-enolpyruvylshikimate-3-phosphate (EPSP) to yield chorismate, which is the branch point compound that serves as the starting substrate for the three terminal pathways of aromatic amino acid biosynthesis. This reaction introduces a second double bond into the aromatic ring system. The chain is Chorismate synthase from Rhodopseudomonas palustris (strain TIE-1).